The chain runs to 25 residues: Dermaseptin-5.1TR (25 aa).

At V25 the chain carries Valine amide.

Expressed by the skin glands.

The protein localises to the secreted. In terms of biological role, has antimicrobial activity. The polypeptide is Dermaseptin-5.1TR (Phyllomedusa trinitatis (Trinidad leaf frog)).